Here is a 451-residue protein sequence, read N- to C-terminus: Gamma-aminobutyric acid receptor subunit alpha-2 (451 aa).

An N-terminal signal peptide occupies residues 1-28; the sequence is MKTKLNIYNMQLLLFVFLVWDPARLVLA. At 29-249 the chain is on the extracellular side; that stretch reads NIQEDEAKNN…MTAHFHLKRK (221 aa). The N-linked (GlcNAc...) asparagine glycan is linked to Asn-38. Residue Arg-94 participates in 4-aminobutanoate binding. An N-linked (GlcNAc...) asparagine glycan is attached at Asn-138. Residue Thr-157 coordinates 4-aminobutanoate. The cysteines at positions 166 and 180 are disulfide-linked. Residues 250–270 traverse the membrane as a helical segment; sequence IGYFVIQTYLPCIMTVILSQV. Over 271 to 280 the chain is Cytoplasmic; sequence SFWLNRESVP. Residues 281–300 form a helical membrane-spanning segment; sequence ARTVFGVTTVLTMTTLSISA. The Extracellular portion of the chain corresponds to 301–311; it reads RNSLPKVAYAT. A helical membrane pass occupies residues 312-332; sequence AMDWFIAVCYAFVFSALIEFA. Topologically, residues 333-420 are cytoplasmic; that stretch reads TVNYFTKRGW…FNSVSKIDRM (88 aa). A helical membrane pass occupies residues 421 to 441; sequence SRIVFPVLFGTFNLVYWATYL. Over 442 to 451 the chain is Extracellular; the sequence is NREPVLGVSP.

It belongs to the ligand-gated ion channel (TC 1.A.9) family. Gamma-aminobutyric acid receptor (TC 1.A.9.5) subfamily. GABRA2 sub-subfamily. Heteropentamer, formed by a combination of alpha (GABRA1-6), beta (GABRB1-3), gamma (GABRG1-3), delta (GABRD), epsilon (GABRE), rho (GABRR1-3), pi (GABRP) and theta (GABRQ) subunits, each subunit exhibiting distinct physiological and pharmacological properties. Interacts with UBQLN1. Interacts with KIF21B. Interacts with LHFPL4. Interacts with SHISA7; interaction leads to the regulation of GABA(A) receptor trafficking, channel deactivation kinetics and pharmacology. Post-translationally, glycosylated.

The protein localises to the postsynaptic cell membrane. It is found in the cell membrane. The protein resides in the cytoplasmic vesicle membrane. Its subcellular location is the cell projection. It localises to the dendrite. It carries out the reaction chloride(in) = chloride(out). With respect to regulation, activated by pentobarbital. Inhibited by the antagonist bicuculline. Functionally, alpha subunit of the heteropentameric ligand-gated chloride channel gated by gamma-aminobutyric acid (GABA), a major inhibitory neurotransmitter in the brain. GABA-gated chloride channels, also named GABA(A) receptors (GABAAR), consist of five subunits arranged around a central pore and contain GABA active binding site(s) located at the alpha and beta subunit interface(s). When activated by GABA, GABAARs selectively allow the flow of chloride anions across the cell membrane down their electrochemical gradient. Chloride influx into the postsynaptic neuron following GABAAR opening decreases the neuron ability to generate a new action potential, thereby reducing nerve transmission. The alpha-2 subunit exhibits synaptogenic activity together with beta-2 and very little to no activity together with beta-3, the gamma-2 subunit being necessary but not sufficient to induce rapid synaptic contacts formation. The polypeptide is Gamma-aminobutyric acid receptor subunit alpha-2 (GABRA2) (Pongo abelii (Sumatran orangutan)).